A 331-amino-acid polypeptide reads, in one-letter code: 2-oxoglutarate-dependent dioxygenase (331 aa).

Residues 186 to 292 enclose the Fe2OG dioxygenase domain; that stretch reads PACPLRLLHY…RYSVVFFMDG (107 aa). The Fe cation site is built by histidine 214, aspartate 216, and histidine 272. Residue arginine 283 participates in 2-oxoglutarate binding.

This sequence belongs to the iron/ascorbate-dependent oxidoreductase family. Fe(2+) serves as cofactor.

Its pathway is mycotoxin biosynthesis. Functionally, 2-oxoglutarate-dependent dioxygenase; part of the gene cluster that mediates the biosynthesis of the selective antifungal agent ascochitine, an o-quinone methide that plays a possible protective role against other microbial competitors in nature and is considered to be important for pathogenicity of legume-associated Didymella species. The pathway probably begins with the synthesis of a keto-aldehyde intermediate by the ascochitine non-reducing polyketide synthase pksAC from successive condensations of 4 malonyl-CoA units, presumably with a simple acetyl-CoA starter unit. Release of the keto-aldehyde intermediate is consistent with the presence of the C-terminal reductive release domain. The HR-PKS (orf7) probably makes a diketide starter unit which is passed to the non-reducing polyketide synthase pksAC for further extension, producing ascochital and ascochitine. The aldehyde dehydrogenase (orf1), the 2-oxoglutarate-dependent dioxygenase (orf3) and the dehydrogenase (orf9) are probably involved in subsequent oxidations of methyl groups to the carboxylic acid of the heterocyclic ring. The ascochitine gene cluster also includes a gene encoding a short peptide with a cupin domain (orf2) that is often found in secondary metabolite gene clusters and which function has still to be determined. The sequence is that of 2-oxoglutarate-dependent dioxygenase from Didymella fabae (Leaf and pod spot disease fungus).